A 681-amino-acid chain; its full sequence is uncharacterized protein (681 aa).

The protein in the N-terminal section; belongs to the purine/pyrimidine phosphoribosyltransferase family.

This is an uncharacterized protein from Mycobacterium tuberculosis (strain CDC 1551 / Oshkosh).